The primary structure comprises 130 residues: Glycine cleavage system H protein (130 aa).

The Lipoyl-binding domain occupies 24–106; sequence TFTVGITDHA…YGDGWLYRIT (83 aa). Lys65 is subject to N6-lipoyllysine.

Belongs to the GcvH family. The glycine cleavage system is composed of four proteins: P, T, L and H. The cofactor is (R)-lipoate.

In terms of biological role, the glycine cleavage system catalyzes the degradation of glycine. The H protein shuttles the methylamine group of glycine from the P protein to the T protein. The chain is Glycine cleavage system H protein from Coxiella burnetii (strain CbuK_Q154) (Coxiella burnetii (strain Q154)).